The primary structure comprises 1209 residues: Phospholipid-transporting ATPase ID (1209 aa).

Residues 1–68 (MTVPKEIPEK…NIVTFLPVNL (68 aa)) lie on the Cytoplasmic side of the membrane. The interval 12-36 (ARAGAPPSWSQKKPSWGTEEERRAR) is disordered. A helical membrane pass occupies residues 69 to 89 (FEQFQEVANTYFLFLLILQLI). Topologically, residues 90–91 (PQ) are exoplasmic loop. The helical transmembrane segment at 92–112 (ISSLSWFTTIVPLVLVLTITA) threads the bilayer. Residues 113–295 (VKDATDDYFR…TSIDRLMNTL (183 aa)) lie on the Cytoplasmic side of the membrane. The helical transmembrane segment at 296-316 (VLWIFGFLVCMGVILAIGNAI) threads the bilayer. The Exoplasmic loop portion of the chain corresponds to 317–338 (WEHEVGTRFQVYLPWDEAVDSA). The chain crosses the membrane as a helical span at residues 339–359 (FFSGFLSFWSYIIILNTVVPI). The Cytoplasmic portion of the chain corresponds to 360-898 (SLYVSVEVIR…KFLCYFFYKN (539 aa)). The active-site 4-aspartylphosphate intermediate is the Asp411. Asp411, Lys412, Thr413, Glu515, Phe556, Lys579, Arg613, Thr693, Gly694, Asp695, Arg807, and Lys813 together coordinate ATP. Asp411 is a binding site for Mg(2+). A Mg(2+)-binding site is contributed by Thr413. Asp833 contributes to the Mg(2+) binding site. Positions 836 and 837 each coordinate ATP. A Mg(2+)-binding site is contributed by Asp837. A helical transmembrane segment spans residues 899 to 919 (FAFTMVHFWFGFFCGFSAQTV). At 920-922 (YDQ) the chain is on the exoplasmic loop side. A helical membrane pass occupies residues 923-943 (YFITLYNIVYTSLPVLAMGVF). Over 944-972 (DQDVPEQRSMEYPKLYEPGQLNLLFNKRE) the chain is Cytoplasmic. Residues 973-993 (FFICIAQGIYTSVLMFFIPYG) traverse the membrane as a helical segment. Over 994-1011 (VFAEATRDDGTQLADYQS) the chain is Exoplasmic loop. The chain crosses the membrane as a helical span at residues 1012–1032 (FAVTVATSLVIVVSVQIGLDT). At 1033–1036 (GYWT) the chain is on the cytoplasmic side. A helical membrane pass occupies residues 1037–1057 (AINHFFIWGSLAVYFAILFAM). Over 1058 to 1082 (HSNGLFDMFPNQFRFVGNAQNTLAQ) the chain is Exoplasmic loop. The chain crosses the membrane as a helical span at residues 1083–1103 (PTVWLTIALTTAVCIMPVVAF). The Cytoplasmic portion of the chain corresponds to 1104-1209 (RFLRLSLKPD…SGGAEKPLKG (106 aa)). The residue at position 1175 (Ser1175) is a Phosphoserine. Residues 1179-1209 (RSSSSWIESLRRKKSDSANSPSGGAEKPLKG) form a disordered region.

It belongs to the cation transport ATPase (P-type) (TC 3.A.3) family. Type IV subfamily. In terms of assembly, component of a P4-ATPase flippase complex which consists of a catalytic alpha subunit ATP8B2 and an accessory beta subunit TMEM30A or TMEM30B. It depends on Mg(2+) as a cofactor. Expressed in brain and testes (at protein level).

Its subcellular location is the cell membrane. It localises to the endoplasmic reticulum membrane. It carries out the reaction ATP + H2O + phospholipidSide 1 = ADP + phosphate + phospholipidSide 2.. It catalyses the reaction a 1,2-diacyl-sn-glycero-3-phosphocholine(out) + ATP + H2O = a 1,2-diacyl-sn-glycero-3-phosphocholine(in) + ADP + phosphate + H(+). Its function is as follows. Catalytic component of P4-ATPase flippase complex, which catalyzes the hydrolysis of ATP coupled to the transport of phosphatidylcholine (PC) from the outer to the inner leaflet of the plasma membrane. May contribute to the maintenance of membrane lipid asymmetry. This Mus musculus (Mouse) protein is Phospholipid-transporting ATPase ID.